Here is a 314-residue protein sequence, read N- to C-terminus: 4-hydroxy-3-methylbut-2-enyl diphosphate reductase (314 aa).

A [4Fe-4S] cluster-binding site is contributed by Cys-18. (2E)-4-hydroxy-3-methylbut-2-enyl diphosphate-binding residues include His-47 and His-80. 2 residues coordinate dimethylallyl diphosphate: His-47 and His-80. The isopentenyl diphosphate site is built by His-47 and His-80. Cys-102 provides a ligand contact to [4Fe-4S] cluster. His-130 is a (2E)-4-hydroxy-3-methylbut-2-enyl diphosphate binding site. His-130 is a binding site for dimethylallyl diphosphate. His-130 serves as a coordination point for isopentenyl diphosphate. The Proton donor role is filled by Glu-132. Thr-171 contributes to the (2E)-4-hydroxy-3-methylbut-2-enyl diphosphate binding site. A [4Fe-4S] cluster-binding site is contributed by Cys-201. Ser-229, Ser-230, Asn-231, and Ser-273 together coordinate (2E)-4-hydroxy-3-methylbut-2-enyl diphosphate. The dimethylallyl diphosphate site is built by Ser-229, Ser-230, Asn-231, and Ser-273. Residues Ser-229, Ser-230, Asn-231, and Ser-273 each contribute to the isopentenyl diphosphate site.

This sequence belongs to the IspH family. Requires [4Fe-4S] cluster as cofactor.

It carries out the reaction isopentenyl diphosphate + 2 oxidized [2Fe-2S]-[ferredoxin] + H2O = (2E)-4-hydroxy-3-methylbut-2-enyl diphosphate + 2 reduced [2Fe-2S]-[ferredoxin] + 2 H(+). The enzyme catalyses dimethylallyl diphosphate + 2 oxidized [2Fe-2S]-[ferredoxin] + H2O = (2E)-4-hydroxy-3-methylbut-2-enyl diphosphate + 2 reduced [2Fe-2S]-[ferredoxin] + 2 H(+). It functions in the pathway isoprenoid biosynthesis; dimethylallyl diphosphate biosynthesis; dimethylallyl diphosphate from (2E)-4-hydroxy-3-methylbutenyl diphosphate: step 1/1. Its pathway is isoprenoid biosynthesis; isopentenyl diphosphate biosynthesis via DXP pathway; isopentenyl diphosphate from 1-deoxy-D-xylulose 5-phosphate: step 6/6. Its function is as follows. Catalyzes the conversion of 1-hydroxy-2-methyl-2-(E)-butenyl 4-diphosphate (HMBPP) into a mixture of isopentenyl diphosphate (IPP) and dimethylallyl diphosphate (DMAPP). Acts in the terminal step of the DOXP/MEP pathway for isoprenoid precursor biosynthesis. The protein is 4-hydroxy-3-methylbut-2-enyl diphosphate reductase of Phenylobacterium zucineum (strain HLK1).